A 124-amino-acid polypeptide reads, in one-letter code: 14 kDa peptide of ubiquinol-cytochrome c2 oxidoreductase complex (124 aa).

The helical transmembrane segment at 85–102 threads the bilayer; sequence LGGFASGALLALALAGIF.

Its subcellular location is the cell inner membrane. Component of the ubiquinol-cytochrome c reductase complex (complex III or cytochrome b-c1 complex), which is a respiratory chain that generates an electrochemical potential coupled to ATP synthesis. The protein is 14 kDa peptide of ubiquinol-cytochrome c2 oxidoreductase complex of Cereibacter sphaeroides (Rhodobacter sphaeroides).